The sequence spans 329 residues: 4-hydroxythreonine-4-phosphate dehydrogenase (329 aa).

Residues histidine 136 and threonine 137 each coordinate substrate. 3 residues coordinate a divalent metal cation: histidine 166, histidine 211, and histidine 266. Substrate is bound by residues lysine 274, asparagine 283, and arginine 292.

This sequence belongs to the PdxA family. In terms of assembly, homodimer. The cofactor is Zn(2+). It depends on Mg(2+) as a cofactor. Requires Co(2+) as cofactor.

The protein localises to the cytoplasm. It catalyses the reaction 4-(phosphooxy)-L-threonine + NAD(+) = 3-amino-2-oxopropyl phosphate + CO2 + NADH. It functions in the pathway cofactor biosynthesis; pyridoxine 5'-phosphate biosynthesis; pyridoxine 5'-phosphate from D-erythrose 4-phosphate: step 4/5. Catalyzes the NAD(P)-dependent oxidation of 4-(phosphooxy)-L-threonine (HTP) into 2-amino-3-oxo-4-(phosphooxy)butyric acid which spontaneously decarboxylates to form 3-amino-2-oxopropyl phosphate (AHAP). The protein is 4-hydroxythreonine-4-phosphate dehydrogenase of Citrobacter koseri (strain ATCC BAA-895 / CDC 4225-83 / SGSC4696).